The following is a 316-amino-acid chain: Cytochrome c biogenesis protein CcsA (316 aa).

The next 8 helical transmembrane spans lie at 12 to 32 (HISL…LLVY), 44 to 64 (GMVA…IYSG), 71 to 91 (LYES…IPYF), 98 to 118 (LNVL…SGVL), 145 to 165 (LSYA…VILF), 222 to 242 (VISL…VWAN), 256 to 270 (TWAF…IYLH), and 283 to 303 (AIVA…VNLL).

It belongs to the CcmF/CycK/Ccl1/NrfE/CcsA family. As to quaternary structure, may interact with Ccs1.

Its subcellular location is the plastid. It is found in the chloroplast thylakoid membrane. Required during biogenesis of c-type cytochromes (cytochrome c6 and cytochrome f) at the step of heme attachment. The polypeptide is Cytochrome c biogenesis protein CcsA (Ranunculus macranthus (Large buttercup)).